A 149-amino-acid chain; its full sequence is Aspartate 1-decarboxylase (149 aa).

Ser25 acts as the Schiff-base intermediate with substrate; via pyruvic acid in catalysis. At Ser25 the chain carries Pyruvic acid (Ser). Residue Thr57 coordinates substrate. Catalysis depends on Tyr58, which acts as the Proton donor. A substrate-binding site is contributed by 73–75 (GAA). The disordered stretch occupies residues 119–149 (GDPAAALPGDPSSLRGDVLDPAGARGLGGGA).

Belongs to the PanD family. In terms of assembly, heterooctamer of four alpha and four beta subunits. Requires pyruvate as cofactor. Is synthesized initially as an inactive proenzyme, which is activated by self-cleavage at a specific serine bond to produce a beta-subunit with a hydroxyl group at its C-terminus and an alpha-subunit with a pyruvoyl group at its N-terminus.

The protein localises to the cytoplasm. It catalyses the reaction L-aspartate + H(+) = beta-alanine + CO2. It participates in cofactor biosynthesis; (R)-pantothenate biosynthesis; beta-alanine from L-aspartate: step 1/1. Functionally, catalyzes the pyruvoyl-dependent decarboxylation of aspartate to produce beta-alanine. This chain is Aspartate 1-decarboxylase, found in Parafrankia sp. (strain EAN1pec).